Reading from the N-terminus, the 746-residue chain is Lysine-specific histone demethylase 1 homolog 2 (746 aa).

Positions 1–26 are disordered; the sequence is MNSPASDETAPRRNRRKVSRKNYDEN. An SWIRM domain is found at 51–152; it reads EKETETEALI…FGVSPLFAPY (102 aa). 4 residues coordinate FAD: Glu-189, Arg-191, Arg-197, and Glu-569.

Belongs to the flavin monoamine oxidase family. FAD serves as cofactor. In terms of tissue distribution, expressed in the shoot and root apical regions of young seedlings. Expressed in inflorescences.

Its function is as follows. Probable histone demethylase that reduces the levels of histone H3 'Lys-4' methylation in chromatin of the floral repressor FLOWERING LOCUS C (FLC) and the sporophytically silenced floral repressor FWA. Seems to act in partial redundancy with FLOWERING LOCUS D (FLD) to repress FLC expression. Required for cytosine methylation of FWA. Controls primary seed dormancy by regulating DOG1 and abscisic acid signaling-related genes. The chain is Lysine-specific histone demethylase 1 homolog 2 from Arabidopsis thaliana (Mouse-ear cress).